A 310-amino-acid polypeptide reads, in one-letter code: Ribosomal protein uL3 glutamine methyltransferase (310 aa).

This sequence belongs to the protein N5-glutamine methyltransferase family. PrmB subfamily.

The catalysed reaction is L-glutaminyl-[ribosomal protein uL3] + S-adenosyl-L-methionine = N(5)-methyl-L-glutaminyl-[ribosomal protein uL3] + S-adenosyl-L-homocysteine + H(+). Functionally, methylates large ribosomal subunit protein uL3 on a specific glutamine residue. In Yersinia pestis, this protein is Ribosomal protein uL3 glutamine methyltransferase.